Consider the following 313-residue polypeptide: PDCD10 and GCKIII kinases-associated protein 1 (313 aa).

A disordered region spans residues 42–95; it reads KGTQNSEVEVPGSTLHSGSLSKPDSSGSTTGLPCQGSLTQEDSEERPCVEKHGI. The span at 58 to 69 shows a compositional bias: low complexity; that stretch reads SGSLSKPDSSGS. A Phosphoserine modification is found at Ser-60. The segment covering 70 to 81 has biased composition (polar residues); the sequence is TTGLPCQGSLTQ. Position 104 is a phosphothreonine (Thr-104). Phosphoserine occurs at positions 107, 237, and 240. A disordered region spans residues 253-288; that stretch reads YFKEEDPTQPTPVADPGNEREDPHTYNGNKEGAVVD.

Interacts with KEAP1; this interaction prevents the ubiquitination of KEAP1 by TRIM25, thus protecting KEAP1 from degradation. Found in association with PDCD10 and members of the STE20 kinases, such as STK24, STK25, and STK26.

It is found in the cell membrane. Acts as a tumor suppressor. Acts as a tumor suppressor for colorectal cancer cell proliferation by targeting KEAP1/USP17/ELK1/CDK6 axis. In Rattus norvegicus (Rat), this protein is PDCD10 and GCKIII kinases-associated protein 1.